Here is a 568-residue protein sequence, read N- to C-terminus: Glucose-6-phosphate isomerase, cytosolic (568 aa).

Residue Glu-360 is the Proton donor of the active site. Catalysis depends on residues His-391 and Lys-516.

The protein belongs to the GPI family. As to quaternary structure, homodimer.

It localises to the cytoplasm. The enzyme catalyses alpha-D-glucose 6-phosphate = beta-D-fructose 6-phosphate. The protein operates within carbohydrate degradation; glycolysis; D-glyceraldehyde 3-phosphate and glycerone phosphate from D-glucose: step 2/4. The protein is Glucose-6-phosphate isomerase, cytosolic (PGIC) of Oenothera sinuata var. hirsuta (Mexican evening primrose).